Reading from the N-terminus, the 130-residue chain is Small ribosomal subunit protein uS11 (130 aa).

It belongs to the universal ribosomal protein uS11 family. Part of the 30S ribosomal subunit. Interacts with proteins S7 and S18. Binds to IF-3.

Its function is as follows. Located on the platform of the 30S subunit, it bridges several disparate RNA helices of the 16S rRNA. Forms part of the Shine-Dalgarno cleft in the 70S ribosome. In Buchnera aphidicola subsp. Schizaphis graminum (strain Sg), this protein is Small ribosomal subunit protein uS11.